We begin with the raw amino-acid sequence, 162 residues long: Phosphopantetheine adenylyltransferase (162 aa).

Position 9 (serine 9) interacts with substrate. Residues 9 to 10 and histidine 17 contribute to the ATP site; that span reads SF. Substrate-binding residues include lysine 41, leucine 73, and lysine 87. Residues 88–90, glutamate 98, and 123–129 contribute to the ATP site; these read GLR and CSFLSSS.

This sequence belongs to the bacterial CoaD family. In terms of assembly, homohexamer. Mg(2+) serves as cofactor.

It localises to the cytoplasm. The enzyme catalyses (R)-4'-phosphopantetheine + ATP + H(+) = 3'-dephospho-CoA + diphosphate. It participates in cofactor biosynthesis; coenzyme A biosynthesis; CoA from (R)-pantothenate: step 4/5. In terms of biological role, reversibly transfers an adenylyl group from ATP to 4'-phosphopantetheine, yielding dephospho-CoA (dPCoA) and pyrophosphate. The protein is Phosphopantetheine adenylyltransferase of Natranaerobius thermophilus (strain ATCC BAA-1301 / DSM 18059 / JW/NM-WN-LF).